The following is a 466-amino-acid chain: Argininosuccinate lyase (466 aa).

It belongs to the lyase 1 family. Argininosuccinate lyase subfamily.

Its subcellular location is the cytoplasm. The enzyme catalyses 2-(N(omega)-L-arginino)succinate = fumarate + L-arginine. The protein operates within amino-acid biosynthesis; L-arginine biosynthesis; L-arginine from L-ornithine and carbamoyl phosphate: step 3/3. In Brucella canis (strain ATCC 23365 / NCTC 10854 / RM-666), this protein is Argininosuccinate lyase.